A 226-amino-acid polypeptide reads, in one-letter code: Urease accessory protein UreF (226 aa).

Belongs to the UreF family. As to quaternary structure, ureD, UreF and UreG form a complex that acts as a GTP-hydrolysis-dependent molecular chaperone, activating the urease apoprotein by helping to assemble the nickel containing metallocenter of UreC. The UreE protein probably delivers the nickel.

It localises to the cytoplasm. Its function is as follows. Required for maturation of urease via the functional incorporation of the urease nickel metallocenter. The chain is Urease accessory protein UreF from Burkholderia cenocepacia (strain HI2424).